The following is a 575-amino-acid chain: MTTMLKGIAASSGVAVAKAYLLVQPDLSFETKTIADTANEEARLDAALATSQSELQLIKDKAVTTLGEEAASVFDAHMMVLADPDMTAQIKAVINDKKVNAESALKEVTDMFIGIFEGMTDNAYMQERAADIKDVTKRVLAHLLGVKLPSPALIDEEVIIVAEDLTPSDTAQLDKKFVKAFVTNIGGRTSHSAIMARTLEIPAVLGTNNITELVSEGQLLAVSGLTGEVILDPSTEQQSEFHKAGEAYAAQKAEWAALKDAETVTADGRHYELAANIGTPKDVEGVNDNGAEAIGLYRTEFLYMDAQDFPTEDDQYEAYKAVLEGMNGKPVVVRTMDIGGDKTLPYFDLPKEMNPFLGWRALRISLSTAGDGMFRTQLRALLRASVHGQLRIMFPMVALVTEFRAAKKIYDEEKAKLIAEGVPVADGIEVGIMIEIPAAAMLADQFAKEVDFFSIGTNDLIQYTMAADRMNEQVSYLYQPYNPSILRLINNVIKAAHAEGKWAGMCGEMAGDQTAVPLLMGMGLDEFSMSATSVLQTRSLMKRLDSKKMEELSSKALSECATMEEVIALVEEYTK.

The Tele-phosphohistidine intermediate role is filled by His191. The phosphoenolpyruvate site is built by Arg298 and Arg334. Mg(2+) is bound by residues Glu435 and Asp459. Residues 458–459 (ND) and Arg469 contribute to the phosphoenolpyruvate site. Cys506 functions as the Proton donor in the catalytic mechanism.

It belongs to the PEP-utilizing enzyme family. Homodimer. It depends on Mg(2+) as a cofactor.

It is found in the cytoplasm. It catalyses the reaction L-histidyl-[protein] + phosphoenolpyruvate = N(pros)-phospho-L-histidyl-[protein] + pyruvate. Its function is as follows. General (non sugar-specific) component of the phosphoenolpyruvate-dependent sugar phosphotransferase system (sugar PTS). This major carbohydrate active-transport system catalyzes the phosphorylation of incoming sugar substrates concomitantly with their translocation across the cell membrane. Enzyme I transfers the phosphoryl group from phosphoenolpyruvate (PEP) to the phosphoryl carrier protein (HPr). The sequence is that of Phosphoenolpyruvate-protein phosphotransferase (ptsI) from Lactococcus lactis subsp. lactis (strain IL1403) (Streptococcus lactis).